Here is an 89-residue protein sequence, read N- to C-terminus: Large ribosomal subunit protein bL27 (89 aa).

The protein belongs to the bacterial ribosomal protein bL27 family.

In Cereibacter sphaeroides (strain ATCC 17029 / ATH 2.4.9) (Rhodobacter sphaeroides), this protein is Large ribosomal subunit protein bL27.